The chain runs to 347 residues: MNPLAQPVIYSTIFAGTLITALSSHWFFTWVGLEMNMLAFIPVLTKKMNPRSTEAAIKYFLTQATASMILLMAILFNNMLSGQWTMTNTTNQYSSLMIMMAMAMKLGMAPFHFWVPEVTQGTPLTSGLLLLTWQKLAPISIMYQISPSLNVSLLLTLSILSIMAGSWGGLNQTQLRKILAYSSITHMGWMMAVLPYNPNMTILNLTIYIILTTTAFLLLNLNSSTTTLLLSRTWNKLTWLTPLIPSTLLSLGGLPPLTGFLPKWAIIEEFTKNNSLIIPTIMATITLLNLYFYLRLIYSTSITLLPMSNNVKMKWQFEHTKPTPFLPTLIALTTLLLPISPFMLMIL.

A run of 10 helical transmembrane segments spans residues 13 to 33 (IFAG…WVGL), 56 to 76 (AIKY…AILF), 96 to 116 (LMIM…FWVP), 123 to 143 (PLTS…SIMY), 149 to 169 (LNVS…SWGG), 178 to 198 (ILAY…PYNP), 201 to 221 (TILN…LLNL), 247 to 267 (TLLS…WAII), 274 to 294 (NSLI…YFYL), and 326 to 346 (LPTL…MLMI).

The protein belongs to the complex I subunit 2 family. In terms of assembly, core subunit of respiratory chain NADH dehydrogenase (Complex I) which is composed of 45 different subunits. Interacts with TMEM242.

Its subcellular location is the mitochondrion inner membrane. The catalysed reaction is a ubiquinone + NADH + 5 H(+)(in) = a ubiquinol + NAD(+) + 4 H(+)(out). Functionally, core subunit of the mitochondrial membrane respiratory chain NADH dehydrogenase (Complex I) which catalyzes electron transfer from NADH through the respiratory chain, using ubiquinone as an electron acceptor. Essential for the catalytic activity and assembly of complex I. The sequence is that of NADH-ubiquinone oxidoreductase chain 2 from Homo sapiens (Human).